Reading from the N-terminus, the 643-residue chain is Threonine--tRNA ligase 1 (643 aa).

The 62-residue stretch at 3–64 folds into the TGS domain; the sequence is DMVKITFPDG…NEDGTVEIIT (62 aa). The interval 245–542 is catalytic; it reads DHRKLGKELK…LIEEHKGALP (298 aa). The Zn(2+) site is built by C338, H389, and H519.

This sequence belongs to the class-II aminoacyl-tRNA synthetase family. As to quaternary structure, homodimer. The cofactor is Zn(2+).

Its subcellular location is the cytoplasm. The catalysed reaction is tRNA(Thr) + L-threonine + ATP = L-threonyl-tRNA(Thr) + AMP + diphosphate + H(+). Its function is as follows. Catalyzes the attachment of threonine to tRNA(Thr) in a two-step reaction: L-threonine is first activated by ATP to form Thr-AMP and then transferred to the acceptor end of tRNA(Thr). Also edits incorrectly charged L-seryl-tRNA(Thr). The polypeptide is Threonine--tRNA ligase 1 (thrS) (Bacillus subtilis (strain 168)).